Consider the following 559-residue polypeptide: POU domain protein 1 (559 aa).

Residues 259 to 333 (EDLPSSDDLE…LLQKWLHEAD (75 aa)) enclose the POU-specific domain. The segment at residues 351–410 (KRKKRTSIEANVKSILESSFMKLSKPSAQDISSLAEKLSLEKEVVRVWFCNRRQKEKRIT) is a DNA-binding region (homeobox).

Belongs to the POU transcription factor family.

The protein resides in the nucleus. The protein is POU domain protein 1 (POU1) of Dugesia japonica (Planarian).